A 159-amino-acid chain; its full sequence is Probable cyclic pyranopterin monophosphate synthase (159 aa).

Substrate is bound by residues 74–76 (MCH) and 110–111 (ME). Aspartate 125 is an active-site residue.

This sequence belongs to the MoaC family. As to quaternary structure, homohexamer; trimer of dimers.

The catalysed reaction is (8S)-3',8-cyclo-7,8-dihydroguanosine 5'-triphosphate = cyclic pyranopterin phosphate + diphosphate. Its pathway is cofactor biosynthesis; molybdopterin biosynthesis. Catalyzes the conversion of (8S)-3',8-cyclo-7,8-dihydroguanosine 5'-triphosphate to cyclic pyranopterin monophosphate (cPMP). This Methanococcoides burtonii (strain DSM 6242 / NBRC 107633 / OCM 468 / ACE-M) protein is Probable cyclic pyranopterin monophosphate synthase.